Reading from the N-terminus, the 156-residue chain is MIVALKVKRIEMGTVLDHLPPGTAPQIMRILDIDPTETTLLVAINVESSKMGRKDILKIEGKILSEEEANKVALVAPNATVNIVRDYSVAEKFQVKPPERVEGFLRCPNPNCITNDEREPVDTVFVRESKKPLEYRCRYCERTVREDQIRELIRPS.

The Zn(2+) site is built by C107, C112, C137, and C140.

This sequence belongs to the PyrI family. As to quaternary structure, contains catalytic and regulatory chains. Zn(2+) is required as a cofactor.

Functionally, involved in allosteric regulation of aspartate carbamoyltransferase. In Methanopyrus kandleri (strain AV19 / DSM 6324 / JCM 9639 / NBRC 100938), this protein is Aspartate carbamoyltransferase regulatory chain.